The chain runs to 176 residues: RING-H2 finger protein ATL14 (176 aa).

Residues Met1–Thr26 are disordered. Residues Phe37 to Ser57 form a helical membrane-spanning segment. An RING-type; atypical zinc finger spans residues Cys115–Arg157.

It belongs to the RING-type zinc finger family. ATL subfamily.

The protein resides in the membrane. The enzyme catalyses S-ubiquitinyl-[E2 ubiquitin-conjugating enzyme]-L-cysteine + [acceptor protein]-L-lysine = [E2 ubiquitin-conjugating enzyme]-L-cysteine + N(6)-ubiquitinyl-[acceptor protein]-L-lysine.. It participates in protein modification; protein ubiquitination. The chain is RING-H2 finger protein ATL14 (ATL14) from Arabidopsis thaliana (Mouse-ear cress).